The following is a 305-amino-acid chain: Transmembrane epididymal protein 1A (305 aa).

The helical transmembrane segment at 4-24 (FIGHISPGLFLVFYGLYQAVI) threads the bilayer. Asn-32 carries an N-linked (GlcNAc...) asparagine glycan. The next 5 helical transmembrane spans lie at 54–74 (IAHA…YEIS), 124–144 (CVLL…LLLV), 159–179 (SLLI…LWAP), 187–207 (IETF…FILF), and 223–243 (IMFV…CMLG). The segment at 285 to 305 (EQQDKDDQAPLLSKISPCDRA) is disordered.

This sequence belongs to the TMEM45 family.

It localises to the membrane. This is Transmembrane epididymal protein 1A from Mus musculus (Mouse).